The following is a 450-amino-acid chain: Histidinol dehydrogenase (450 aa).

NAD(+) contacts are provided by Tyr-135, Gln-197, and Asn-225. Thr-248, Gln-270, and His-273 together coordinate substrate. Zn(2+) contacts are provided by Gln-270 and His-273. Catalysis depends on proton acceptor residues Glu-339 and His-340. His-340, Asp-373, Glu-427, and His-432 together coordinate substrate. Position 373 (Asp-373) interacts with Zn(2+). His-432 is a Zn(2+) binding site.

The protein belongs to the histidinol dehydrogenase family. Zn(2+) is required as a cofactor.

It catalyses the reaction L-histidinol + 2 NAD(+) + H2O = L-histidine + 2 NADH + 3 H(+). It functions in the pathway amino-acid biosynthesis; L-histidine biosynthesis; L-histidine from 5-phospho-alpha-D-ribose 1-diphosphate: step 9/9. Its function is as follows. Catalyzes the sequential NAD-dependent oxidations of L-histidinol to L-histidinaldehyde and then to L-histidine. The protein is Histidinol dehydrogenase of Corynebacterium jeikeium (strain K411).